A 119-amino-acid polypeptide reads, in one-letter code: MQEILLKSKIHMAKVTDKSINYMGSIGIDVELLEKSNIKPYELVLVADVNNGQRFVTYTIPEEKGSRKIVVNGAAARLVEQGDRVIIMAFGMYENDEYKGPRVLIMNEDNEVVEIREGT.

Ser-25 acts as the Schiff-base intermediate with substrate; via pyruvic acid in catalysis. A Pyruvic acid (Ser) modification is found at Ser-25. Thr-57 lines the substrate pocket. Tyr-58 functions as the Proton donor in the catalytic mechanism. A substrate-binding site is contributed by 73-75 (GAA).

It belongs to the PanD family. Heterooctamer of four alpha and four beta subunits. It depends on pyruvate as a cofactor. Post-translationally, is synthesized initially as an inactive proenzyme, which is activated by self-cleavage at a specific serine bond to produce a beta-subunit with a hydroxyl group at its C-terminus and an alpha-subunit with a pyruvoyl group at its N-terminus.

It localises to the cytoplasm. It carries out the reaction L-aspartate + H(+) = beta-alanine + CO2. The protein operates within cofactor biosynthesis; (R)-pantothenate biosynthesis; beta-alanine from L-aspartate: step 1/1. Its function is as follows. Catalyzes the pyruvoyl-dependent decarboxylation of aspartate to produce beta-alanine. This chain is Aspartate 1-decarboxylase, found in Thermosipho melanesiensis (strain DSM 12029 / CIP 104789 / BI429).